A 550-amino-acid polypeptide reads, in one-letter code: Glucose-6-phosphate isomerase 2 (550 aa).

Catalysis depends on Glu-359, which acts as the Proton donor. Active-site residues include His-390 and Lys-514.

It belongs to the GPI family.

The protein localises to the cytoplasm. The catalysed reaction is alpha-D-glucose 6-phosphate = beta-D-fructose 6-phosphate. Its pathway is carbohydrate biosynthesis; gluconeogenesis. The protein operates within carbohydrate degradation; glycolysis; D-glyceraldehyde 3-phosphate and glycerone phosphate from D-glucose: step 2/4. Its function is as follows. Catalyzes the reversible isomerization of glucose-6-phosphate to fructose-6-phosphate. The chain is Glucose-6-phosphate isomerase 2 from Streptomyces avermitilis (strain ATCC 31267 / DSM 46492 / JCM 5070 / NBRC 14893 / NCIMB 12804 / NRRL 8165 / MA-4680).